The primary structure comprises 441 residues: MSEMTPREIVHELDSHIIGQQNAKRSVAIALRNRWRRMQLDAALRQEVTPKNILMIGPTGVGKTEIARRLAKLAKAPFIKVEATKFTEVGYVGKEVEQIIRDLTDAAVKLTREEQMAKCKFRAEEAAEERILDALLPKPKEDWDTEKKDDTGTRQVFRKKLREGQLDDKEIEIDIAAPQVGIEIMSPPGMEEMTSQLQSMFQNMGPGASKRRKMTIKEAYKLLIEEEAAKLVNPDDLKEQAIELVEQHGIVFLDEIDKICKRGDTSGPDVSREGVQRDLLPLVEGCTVNTKHGMVKTDHILFIASGAFQMSKPSDLIPELQGRLPIRVELEALSANDFKRILTEPHASLTEQYVALMATEGVKVEFSESGIERIAQAAWQVNERTENIGARRLHTVMERLMEDLSFEASDKSGSTTVIDADYVNAHLENLVQDEDLSRFIL.

Residues isoleucine 18, 60–65, aspartate 254, glutamate 319, and arginine 391 contribute to the ATP site; that span reads GVGKTE.

This sequence belongs to the ClpX chaperone family. HslU subfamily. As to quaternary structure, a double ring-shaped homohexamer of HslV is capped on each side by a ring-shaped HslU homohexamer. The assembly of the HslU/HslV complex is dependent on binding of ATP.

The protein localises to the cytoplasm. ATPase subunit of a proteasome-like degradation complex; this subunit has chaperone activity. The binding of ATP and its subsequent hydrolysis by HslU are essential for unfolding of protein substrates subsequently hydrolyzed by HslV. HslU recognizes the N-terminal part of its protein substrates and unfolds these before they are guided to HslV for hydrolysis. The sequence is that of ATP-dependent protease ATPase subunit HslU from Shewanella loihica (strain ATCC BAA-1088 / PV-4).